Here is a 283-residue protein sequence, read N- to C-terminus: Glutamyl-Q tRNA(Asp) synthetase (283 aa).

Residues 5–9 (RFAPT) and Glu41 each bind L-glutamate. The 'HIGH' region motif lies at 8-18 (PTPSGPLHLGS). Residues Cys97, Cys99, Tyr111, and Cys115 each contribute to the Zn(2+) site. The L-glutamate site is built by Tyr168 and Arg186. The 'KMSKS' region signature appears at 224–228 (KLSKQ). ATP is bound at residue Lys227.

The protein belongs to the class-I aminoacyl-tRNA synthetase family. GluQ subfamily. Zn(2+) is required as a cofactor.

Catalyzes the tRNA-independent activation of glutamate in presence of ATP and the subsequent transfer of glutamate onto a tRNA(Asp). Glutamate is transferred on the 2-amino-5-(4,5-dihydroxy-2-cyclopenten-1-yl) moiety of the queuosine in the wobble position of the QUC anticodon. The protein is Glutamyl-Q tRNA(Asp) synthetase of Idiomarina loihiensis (strain ATCC BAA-735 / DSM 15497 / L2-TR).